Here is a 1123-residue protein sequence, read N- to C-terminus: MAAAVLSGASAGSPAGAPGGPGGLSAVGSGPRLRLLLLESISGLLQPRTASPVAPVHPPIQWAPHLPGLMCLLRLHGTAGGAQNLSALGALVNLSNAHLGSIKTRFEGLCLLSLLIGESPTELFQQHCVSWLRSIQQVLQSQDSPSTMELAVAVLRDLLRHASQLPTLFRDISTNHLPGLLTSLLGLRPECEQSALEGMKACVTYFPRACGSLKGKLASFFLSRLDSLNPQLQQLACECYSRLPSLGAGFSQGLKHTENWEQELHSLLTSLHSLLGSLFEETEPAPVQSEGPGIEMLLSHSEDGNTHVLLQLRQRFSGLARCLGLMLSSEFGAPVSVPVQEILDLICRILGISSKNINLLGDGPLRLLLLPSLHLEALDLLSALILACGSRLLRFGALISRLLPQVLNAWSTGRDTLAPGQERPYSTIRTKVYAILELWVQVCGASAGMLQGGASGEALLTHLLSDISPPADALKLCSTRGSSDGGLQSGKPSAPKKLKLDMGEALAPPSQRKGDRNANSDVCAAALRGLSRTILMCGPLIKEETHRRLHDLVLPLVMSVQQGEVLGSSPYNSSCCRLGLYRLLLALLLAPSPRCPPPLACALKAFSLGQWEDSLEVSSFCSEALVTCAALTHPRVPPLQSSGPACPTPAPVPPPEAPSSFRAPAFHPPGPMPSIGAVPSTGPLPSAGPIPTVGSMASTGQVPSRPGPPATANHLGLSVPGLVSVPPRLLPGPENHRAGSGEDPVLAPSGTPPPSIPPDETFGGRVPRPAFVHYDKEEASDVEISLESDSDDSVVIVPEGLPSLPPAPPSGTPPPAAPAGPPTASPPVPAKEDSEELPATPGPPPPPPPPPPPASGPVTLPPPQLVPEGTPGGGGPTAMEEDLTVININSSDEEEEEEEEEEEEDEDEEEEDFEEEEEDEEEYFEEEEEEEEFEEEFEEEEGELEEEEEEEEEELDEVEDVEFGSAGEVEEGGPPPPTLPPALPPSDSPKVQPEAEPEPGLLLEVEEPGPEEVPGPETAPTLAPEVLPSQEEGEQEVGSPAAGPPQELVEESSAPPALLEEGTEGGGDKVPPPPETPAEEMETEAEVPAPQEKEQDDTAAMLADFIDCPPDDEKPPPATEPDS.

Ala-2 is modified (N-acetylalanine). The tract at residues 2-80 (AAAVLSGASA…CLLRLHGTAG (79 aa)) is required for modulation of ESR1 transcriptional activity. Ser-13 carries the post-translational modification Phosphoserine. 9 consecutive short sequence motifs (LXXLL motif) follow at residues 33-37 (LRLLL), 69-73 (LMCLL), 111-115 (LLSLL), 155-159 (LRDLL), 177-181 (LPGLL), 264-268 (LHSLL), 271-275 (LHSLL), 365-369 (LRLLL), and 460-464 (LTHLL). The required for modulation of ESR1 transcriptional activity stretch occupies residues 121–189 (TELFQQHCVS…LLTSLLGLRP (69 aa)). Phosphoserine occurs at positions 478 and 482. Short sequence motifs (LXXLL motif) lie at residues 580–584 (LYRLL) and 585–589 (LALLL). Disordered regions lie at residues 639-767 (LQSS…GRVP) and 779-1123 (ASDV…EPDS). Positions 646-657 (CPTPAPVPPPEA) are enriched in pro residues. Thr-751 is modified (phosphothreonine). Residue Ser-755 is modified to Phosphoserine. Over residues 780 to 792 (SDVEISLESDSDD) the composition is skewed to acidic residues. 2 stretches are compositionally biased toward pro residues: residues 803–829 (SLPP…PPVP) and 840–865 (TPGP…PPQL). Acidic residues predominate over residues 891–962 (SDEEEEEEEE…EELDEVEDVE (72 aa)). Over residues 973–987 (GPPPPTLPPALPPSD) the composition is skewed to pro residues. Residues Ser-1029 and Ser-1039 each carry the phosphoserine modification.

This sequence belongs to the RIX1/PELP1 family. As to quaternary structure, interacts with HRS, RXRA, SUMO2, HDAC2, RB1 and STAT3. Interacts with PI3K, SRC and EGFR in cytoplasm. Interacts with ESR1, the interaction is enhanced by 17-beta-estradiol; the interaction increases ESR1 transcriptional activity. Interacts with CREBBP and EP300 in a ligand-dependent manner. Forms two complexes in the presence of 17-beta-estradiol; one with SRC and ESR1 and another with LCK and ESR1. Interacts with histone H1 and H3 with a greater affinity for H1. Component of some MLL1/MLL complex, at least composed of the core components KMT2A/MLL1, ASH2L, HCFC1/HCF1, WDR5 and RBBP5, as well as the facultative components BACC1, CHD8, E2F6, HSP70, INO80C, KANSL1, LAS1L, MAX, MCRS1, MGA, KAT8/MOF, PELP1, PHF20, PRP31, RING2, RUVB1/TIP49A, RUVB2/TIP49B, SENP3, TAF1, TAF4, TAF6, TAF7, TAF9 and TEX10. Core component of the 5FMC complex, at least composed of PELP1, LAS1L, TEX10, WDR18 and SENP3; the complex interacts with methylated CHTOP and ZNF148. Interacts with NOL9. Interacts with BCAS3. Component of the PELP1 complex, composed of at least PELP1, TEX10 and WDR18. The complex interacts (via PELP1) with MDN1 (via its hexameric AAA ATPase ring) and the pre-60S ribosome particles. In terms of processing, transiently sumoylated, preferentially conjugated to SUMO2 or SUMO3. Sumoylation causes nucleolar exclusion of PELP1 and promotes the recruitment of MDN1 to pre-60S particles. Desumoylation by SUMO isopeptidase SENP3 is needed to release both PELP1 and MDN1 from pre-ribosomes. Widely expressed with high levels in testis, ovary, uterus and pituitary gland.

It localises to the nucleus. It is found in the nucleolus. Its subcellular location is the nucleoplasm. The protein localises to the cytoplasm. Coactivator of estrogen receptor-mediated transcription and a corepressor of other nuclear hormone receptors and sequence-specific transcription factors. Plays a role in estrogen receptor (ER) genomic activity when present in the nuclear compartment by activating the ER target genes in a hormonal stimulation dependent manner. Can facilitate ER non-genomic signaling via SRC and PI3K interaction in the cytosol. Plays a role in E2-mediated cell cycle progression by interacting with RB1. May have important functional implications in ER/growth factor cross-talk. Interacts with several growth factor signaling components including EGFR and HRS. Functions as the key stabilizing component of the Five Friends of Methylated CHTOP (5FMC) complex; the 5FMC complex is recruited to ZNF148 by methylated CHTOP, leading to desumoylation of ZNF148 and subsequent transactivation of ZNF148 target genes. Component of the PELP1 complex involved in the nucleolar steps of 28S rRNA maturation and the subsequent nucleoplasmic transit of the pre-60S ribosomal subunit. Regulates pre-60S association of the critical remodeling factor MDN1. The polypeptide is Proline-, glutamic acid- and leucine-rich protein 1 (Pelp1) (Mus musculus (Mouse)).